The primary structure comprises 247 residues: Probable phosphatase Shew_1420 (247 aa).

Zn(2+) is bound by residues His-8, His-10, His-16, His-41, Glu-74, His-102, His-132, Asp-193, and His-195.

It belongs to the PHP family. The cofactor is Zn(2+).

The sequence is that of Probable phosphatase Shew_1420 from Shewanella loihica (strain ATCC BAA-1088 / PV-4).